Reading from the N-terminus, the 1217-residue chain is Valine--tRNA ligase (1217 aa).

The GST C-terminal domain maps to 27 to 155 (NAKQQSQVWQ…ISLCEKMVPV (129 aa)). A 'HIGH' region motif is present at residues 293 to 303 (PNVTGSLHLGH). The short motif at 809–813 (KMSKS) is the 'KMSKS' region element. Position 812 (K812) interacts with ATP.

Belongs to the class-I aminoacyl-tRNA synthetase family.

It carries out the reaction tRNA(Val) + L-valine + ATP = L-valyl-tRNA(Val) + AMP + diphosphate. The protein is Valine--tRNA ligase (vars1) of Takifugu rubripes (Japanese pufferfish).